The following is a 225-amino-acid chain: Ribonuclease 3 (225 aa).

An RNase III domain is found at Val5–Asp127. Mg(2+) is bound at residue Glu40. Asp44 is a catalytic residue. Residues Asp113 and Glu116 each coordinate Mg(2+). Glu116 is an active-site residue. In terms of domain architecture, DRBM spans Asp154–Asn223.

Belongs to the ribonuclease III family. As to quaternary structure, homodimer. Requires Mg(2+) as cofactor.

The protein resides in the cytoplasm. The enzyme catalyses Endonucleolytic cleavage to 5'-phosphomonoester.. Functionally, digests double-stranded RNA. Involved in the processing of primary rRNA transcript to yield the immediate precursors to the large and small rRNAs (23S and 16S). Processes some mRNAs, and tRNAs when they are encoded in the rRNA operon. Processes pre-crRNA and tracrRNA of type II CRISPR loci if present in the organism. The chain is Ribonuclease 3 from Pseudoalteromonas translucida (strain TAC 125).